The chain runs to 364 residues: Methylthioribose-1-phosphate isomerase (364 aa).

The Proton donor role is filled by Asp-254.

Belongs to the eIF-2B alpha/beta/delta subunits family. MtnA subfamily.

The protein localises to the cytoplasm. It is found in the nucleus. The catalysed reaction is 5-(methylsulfanyl)-alpha-D-ribose 1-phosphate = 5-(methylsulfanyl)-D-ribulose 1-phosphate. It functions in the pathway amino-acid biosynthesis; L-methionine biosynthesis via salvage pathway; L-methionine from S-methyl-5-thio-alpha-D-ribose 1-phosphate: step 1/6. In terms of biological role, catalyzes the interconversion of methylthioribose-1-phosphate (MTR-1-P) into methylthioribulose-1-phosphate (MTRu-1-P). The sequence is that of Methylthioribose-1-phosphate isomerase from Drosophila melanogaster (Fruit fly).